The primary structure comprises 63 residues: Small ribosomal subunit protein bS21 (63 aa).

Belongs to the bacterial ribosomal protein bS21 family.

The polypeptide is Small ribosomal subunit protein bS21 (Porphyromonas gingivalis (strain ATCC 33277 / DSM 20709 / CIP 103683 / JCM 12257 / NCTC 11834 / 2561)).